The chain runs to 278 residues: Sulfur carrier protein FdhD (278 aa).

The active-site Cysteine persulfide intermediate is cysteine 120.

This sequence belongs to the FdhD family.

Its subcellular location is the cytoplasm. In terms of biological role, required for formate dehydrogenase (FDH) activity. Acts as a sulfur carrier protein that transfers sulfur from IscS to the molybdenum cofactor prior to its insertion into FDH. The sequence is that of Sulfur carrier protein FdhD from Bordetella petrii (strain ATCC BAA-461 / DSM 12804 / CCUG 43448).